The sequence spans 520 residues: GMP synthase [glutamine-hydrolyzing] (520 aa).

One can recognise a Glutamine amidotransferase type-1 domain in the interval 9–202 (TILIIDFGSQ…VHRIVGVKPG (194 aa)). C86 functions as the Nucleophile in the catalytic mechanism. Active-site residues include H176 and E178. The GMPS ATP-PPase domain maps to 203 to 395 (WTMGAYREQA…LGLPDSFIGR (193 aa)). 230–236 (SGGVDSS) contacts ATP.

In terms of assembly, homodimer.

It catalyses the reaction XMP + L-glutamine + ATP + H2O = GMP + L-glutamate + AMP + diphosphate + 2 H(+). It functions in the pathway purine metabolism; GMP biosynthesis; GMP from XMP (L-Gln route): step 1/1. Functionally, catalyzes the synthesis of GMP from XMP. This Brucella ovis (strain ATCC 25840 / 63/290 / NCTC 10512) protein is GMP synthase [glutamine-hydrolyzing].